Here is a 347-residue protein sequence, read N- to C-terminus: Methionine import ATP-binding protein MetN (347 aa).

Residues 2-241 form the ABC transporter domain; the sequence is IKLEGVSKTY…PATRLGRDFL (240 aa). Residue 38–45 coordinates ATP; that stretch reads GLSGAGKS.

The protein belongs to the ABC transporter superfamily. Methionine importer (TC 3.A.1.24) family. The complex is composed of two ATP-binding proteins (MetN), two transmembrane proteins (MetI) and a solute-binding protein (MetQ).

The protein resides in the cell inner membrane. It carries out the reaction L-methionine(out) + ATP + H2O = L-methionine(in) + ADP + phosphate + H(+). The enzyme catalyses D-methionine(out) + ATP + H2O = D-methionine(in) + ADP + phosphate + H(+). Part of the ABC transporter complex MetNIQ involved in methionine import. Responsible for energy coupling to the transport system. The polypeptide is Methionine import ATP-binding protein MetN (Chromohalobacter salexigens (strain ATCC BAA-138 / DSM 3043 / CIP 106854 / NCIMB 13768 / 1H11)).